We begin with the raw amino-acid sequence, 923 residues long: RNA polymerase-associated protein RapA (923 aa).

The 171-residue stretch at 162 to 332 (EVGNRVNPRV…FARLRLLDPE (171 aa)) folds into the Helicase ATP-binding domain. 175–182 (DEVGLGKT) provides a ligand contact to ATP. The DEAH box signature appears at 278–281 (DEAH). The region spanning 443–597 (KIDWLIDFLK…TCPMGMALFS (155 aa)) is the Helicase C-terminal domain.

It belongs to the SNF2/RAD54 helicase family. RapA subfamily. As to quaternary structure, interacts with the RNAP. Has a higher affinity for the core RNAP than for the holoenzyme. Its ATPase activity is stimulated by binding to RNAP.

Transcription regulator that activates transcription by stimulating RNA polymerase (RNAP) recycling in case of stress conditions such as supercoiled DNA or high salt concentrations. Probably acts by releasing the RNAP, when it is trapped or immobilized on tightly supercoiled DNA. Does not activate transcription on linear DNA. Probably not involved in DNA repair. This Haemophilus influenzae (strain ATCC 51907 / DSM 11121 / KW20 / Rd) protein is RNA polymerase-associated protein RapA.